The primary structure comprises 426 residues: Torsin-4A (426 aa).

The segment at glutamine 41 to glycine 60 is disordered. Residues serine 48–glycine 60 are compositionally biased toward low complexity. Serine 58 and serine 76 each carry phosphoserine. At threonine 84 the chain carries Phosphothreonine. Phosphoserine is present on serine 101. The helical transmembrane segment at cysteine 117–isoleucine 133 threads the bilayer. Glycine 189 to serine 196 serves as a coordination point for ATP.

The protein belongs to the ClpA/ClpB family. Torsin subfamily.

The protein resides in the membrane. The protein is Torsin-4A (Tor4a) of Mus musculus (Mouse).